We begin with the raw amino-acid sequence, 668 residues long: Golgin candidate 2 (668 aa).

The disordered stretch occupies residues 22-317; sequence QAADSLRKDE…RQREERRRRR (296 aa). The segment covering 26–39 has biased composition (basic and acidic residues); the sequence is SLRKDEKSETHDEV. 2 stretches are compositionally biased toward polar residues: residues 64–86 and 100–113; these read GSDS…LSSS and SAPS…NTKL. Composition is skewed to low complexity over residues 123–141 and 168–178; these read STPN…GGTS and SSSSNVVNSRG. Basic and acidic residues-rich tracts occupy residues 184 to 207, 215 to 237, and 250 to 259; these read TNKE…RNAP, THKE…RRSA, and GKRDGRESRR. The span at 290–302 shows a compositional bias: acidic residues; sequence DESESDYESDSST. Positions 303–312 are enriched in basic and acidic residues; that stretch reads DSERERQREE. The stretch at 331–539 forms a coiled coil; the sequence is AVIKERENMV…SQVEALSSEK (209 aa). Transmembrane regions (helical) follow at residues 594–614 and 622–642; these read KHLG…TVFL and IWAV…LLSH.

The protein localises to the golgi apparatus membrane. Functionally, golgi matrix protein playing a role in tethering of vesicles to Golgi membranes and in maintaining the overall structure of the Golgi apparatus. In Arabidopsis thaliana (Mouse-ear cress), this protein is Golgin candidate 2 (GC2).